A 59-amino-acid polypeptide reads, in one-letter code: Protein SspF (59 aa).

This sequence belongs to the alpha/beta-type SASP family.

In terms of biological role, may play some important role in either sporulation or the dormant spore. The polypeptide is Protein SspF (sspF) (Bacillus cereus (strain ATCC 14579 / DSM 31 / CCUG 7414 / JCM 2152 / NBRC 15305 / NCIMB 9373 / NCTC 2599 / NRRL B-3711)).